The chain runs to 930 residues: Bifunctional uridylyltransferase/uridylyl-removing enzyme (930 aa).

A uridylyltransferase region spans residues 1 to 387 (MAPASEAGPA…IMGLFRRKKR (387 aa)). The segment at 388-741 (LKPEYSLVNG…LDPDPDRDAT (354 aa)) is uridylyl-removing. Residues 504–626 (VDEHTIQCIS…VRSKKRLDLL (123 aa)) enclose the HD domain. 2 consecutive ACT domains span residues 742–818 (RACF…VVAR) and 852–927 (IIEV…GAER).

This sequence belongs to the GlnD family. Mg(2+) is required as a cofactor.

The catalysed reaction is [protein-PII]-L-tyrosine + UTP = [protein-PII]-uridylyl-L-tyrosine + diphosphate. It catalyses the reaction [protein-PII]-uridylyl-L-tyrosine + H2O = [protein-PII]-L-tyrosine + UMP + H(+). Uridylyltransferase (UTase) activity is inhibited by glutamine, while glutamine activates uridylyl-removing (UR) activity. Functionally, modifies, by uridylylation and deuridylylation, the PII regulatory proteins (GlnB and homologs), in response to the nitrogen status of the cell that GlnD senses through the glutamine level. Under low glutamine levels, catalyzes the conversion of the PII proteins and UTP to PII-UMP and PPi, while under higher glutamine levels, GlnD hydrolyzes PII-UMP to PII and UMP (deuridylylation). Thus, controls uridylylation state and activity of the PII proteins, and plays an important role in the regulation of nitrogen fixation and metabolism. This is Bifunctional uridylyltransferase/uridylyl-removing enzyme from Cereibacter sphaeroides (strain ATCC 17023 / DSM 158 / JCM 6121 / CCUG 31486 / LMG 2827 / NBRC 12203 / NCIMB 8253 / ATH 2.4.1.) (Rhodobacter sphaeroides).